The chain runs to 506 residues: Maturase K (506 aa).

The protein belongs to the intron maturase 2 family. MatK subfamily.

Its subcellular location is the plastid. The protein resides in the chloroplast. In terms of biological role, usually encoded in the trnK tRNA gene intron. Probably assists in splicing its own and other chloroplast group II introns. The sequence is that of Maturase K from Sullivantia sullivantii (Sullivant's coolwort).